Here is a 576-residue protein sequence, read N- to C-terminus: Malonate--CoA ligase ACSF3, mitochondrial (576 aa).

Residues 1 to 83 (MLPHVVLTFR…RSLRLSQEIC (83 aa)) constitute a mitochondrion transit peptide. ATP is bound by residues 202 to 210 (TSGTTGRPK), Asp457, Arg471, and Lys563.

It belongs to the ATP-dependent AMP-binding enzyme family.

The protein resides in the mitochondrion. It catalyses the reaction tetracosanoate + ATP + CoA = tetracosanoyl-CoA + AMP + diphosphate. The catalysed reaction is malonate + ATP + CoA = malonyl-CoA + AMP + diphosphate. In terms of biological role, catalyzes the initial reaction in intramitochondrial fatty acid synthesis, by activating malonate and methylmalonate, but not acetate, into their respective CoA thioester. May have some preference toward very-long-chain substrates. This Homo sapiens (Human) protein is Malonate--CoA ligase ACSF3, mitochondrial.